A 7354-amino-acid polypeptide reads, in one-letter code: Microtubule-actin cross-linking factor 1, isoforms 1/2/3/4 (7354 aa).

The segment at 1–47 (MSSSDEETLSERSCRSERSCRSERSYRSERSGSLSPCPPGDTLPWNL) is disordered. The actin-binding stretch occupies residues 1 to 295 (MSSSDEETLS…VITYVSSIYD (295 aa)). S4 is modified (phosphoserine). The segment covering 9–30 (LSERSCRSERSCRSERSYRSER) has biased composition (basic and acidic residues). Position 35 is a phosphoserine (S35). T42 carries the post-translational modification Phosphothreonine. S57 carries the post-translational modification Phosphoserine. 2 consecutive Calponin-homology (CH) domains span residues 78–181 (RVQK…LHFQ) and 194–298 (MSAK…DAFP). Residues 148-171 (QRQVKLVNIRNDDITDGNPKLTLG) form an LRR 1 repeat. At S280 the chain carries Phosphoserine. LRR repeat units lie at residues 377 to 399 (LYKLLEVWIEFGRIKLPQGYHPN) and 441 to 464 (LNCEEKLTLAKNTLQADAAHLESG). The region spanning 868–925 (KSTLSVKAICDYRQIEITICKNDECVLEDNSQRTKWKVISPTGNEAMVPSVCFLIPPP) is the SH3 domain. The LRR 5 repeat unit spans residues 1050 to 1073 (ISELKNIRLLLEECEQRLLKQIQS). A Phosphoserine modification is found at S1122. LRR repeat units lie at residues 1128–1154 (ATTLRSELNLMVEKMDHVYGLSTVYLN), 1187–1210 (PADLSALESHRTTLQHWLSDVKDK), and 1257–1282 (HRVIAQLETRQSEVESIQEVLRDYRA). Residues S1367 and S1376 each carry the phosphoserine modification. Plectin repeat units lie at residues 1577-1619 (LVLL…QLLG), 1654-1696 (LKVL…ELQS), 1769-1809 (RLLE…CAIL), 1811-1848 (RQLQTGGIIDTVTGDRMTIDEAVTNNLVAAKIALVILE), and 1855-1885 (GLLLPESGEILPITDALEQGIVSTELAHKIL). S2051, S2077, and S2081 each carry phosphoserine. Composition is skewed to basic and acidic residues over residues 2120–2131 (KEEQAETLREEN) and 2145–2155 (SEGKDLSTEKS). The tract at residues 2120-2155 (KEEQAETLREENISGDPLLVECPEESEGKDLSTEKS) is disordered. Plectin repeat units follow at residues 2276-2316 (STLS…VKLM), 2352-2393 (NVLM…RILE), 2394-2425 (GQVITGGIVDLKRGKKLSVTLASNLGLVDTAD), 2487-2528 (LLTK…LRKV), and 2671-2715 (LKVL…ASHQ). Disordered stretches follow at residues 2806-2841 (AGIRGSNGEKAEKGRKISVEMEGQRQDEKASSDSKV), 2951-2978 (EMGGEQSVQMSREAAVLSEEESDQEVTI), and 3058-3099 (SQET…HISK). The span at 2812-2837 (NGEKAEKGRKISVEMEGQRQDEKASS) shows a compositional bias: basic and acidic residues. A compositionally biased stretch (acidic residues) spans 2968–2978 (SEEESDQEVTI). S3082 and S3085 each carry phosphoserine. LRR repeat units follow at residues 3225-3244 (VGQRGPRVLASLLPEKLPTR), 3606-3630 (SGKSSLLCAEPKVDLKDLQGDIQSH), and 3657-3681 (LTALREKLHQAKEQYEVLQERTRVA). 2 Spectrin repeats span residues 3845 to 3920 (ELQK…NFEE) and 3962 to 4070 (QYQQ…ALLQ). S3889 is modified (phosphoserine). An LRR 12 repeat occupies 3898–3920 (KGDLRFVTISGQKVLETENNFEE). LRR repeat units lie at residues 4087–4112 (LQSIREVEQNLERDQVASLSSGVIQE) and 4223–4249 (IQELTLAMEDQKENLDTLEHLVTTLGS). The Spectrin 3 repeat unit spans residues 4428-4536 (RMEEVQKEAS…TVARQKQLEE (109 aa)). A phosphoserine mark is found at S4458 and S4483. LRR repeat units follow at residues 4473 to 4496 (KAFLAELEQNSPKIQKVKEALAGL), 4563 to 4583 (GVLGPLSIDPNMLKQQVQFML), and 4728 to 4751 (KKRLETVALPLQGLEDLAADRMNR). The Spectrin 4 repeat unit spans residues 4759 to 4863 (TQQFQQMFDE…KTANRQSRLK (105 aa)). The residue at position 4921 (S4921) is a Phosphoserine. LRR repeat units lie at residues 5010–5035 (NKNLEKLKAQQEVLQALEPQVDYLRN), 5131–5153 (NKIQALRFDIEDSEAECRKMLEE), and 5240–5263 (KDQVDPLQVKLQQVNGLGQGLIQS). Spectrin repeat units lie at residues 5195–5300 (EDFY…QLQE), 5307–5409 (KFQD…QLED), 5414–5506 (AKQF…ADIT), 5631–5735 (RSQQ…ARLE), 5742–5844 (NQFW…ALDE), 5961–6066 (LAEK…KLED), 6071–6175 (AVQY…HKLE), 6181–6284 (LGQF…QQLQ), 6289–6395 (QAQG…KLEE), 6400–6503 (ATEF…RSLD), 6508–6614 (RAKQ…KLEE), 6621–6722 (QFMD…RLEQ), and 6726–6830 (QAEE…QRLE). T5394 is subject to Phosphothreonine. 2 LRR repeats span residues 5654-5678 (MALGPIRLEQDQTTAQLQVQKAFSI) and 5763-5787 (AQLPPPAVDHEQLRQQQEEMRQLRE). Residue S5988 is modified to Phosphoserine. K6166 bears the N6-acetyllysine mark. An LRR 23 repeat occupies 6452–6475 (RDQIIELDQTGNQLKFLSQKQDVV). The tract at residues 6904–6937 (SVEPTHAPFMEKSRSGSRKSLNQPTPPPMPILSQ) is disordered. The residue at position 6923 (S6923) is a Phosphoserine. EF-hand domains follow at residues 7001–7036 (HKKSRVMDFFRRIDKDQDGKITRQEFIDGILASKFP) and 7037–7072 (TTKLEMTAVADIFDRDGDGYIDYYEFVAALHPNKDA). The Ca(2+) site is built by D7014, D7016, D7018, K7020, E7025, D7050, D7052, D7054, Y7056, and E7061. One can recognise a GAR domain in the interval 7077-7155 (TDADKIEDEV…EFLVKNDPCR (79 aa)). The interval 7077–7354 (TDADKIEDEV…ASPRTPGPKR (278 aa)) is C-terminal tail. Residues 7171–7354 (PEGASQGMTP…ASPRTPGPKR (184 aa)) are disordered. The segment covering 7191–7225 (SSRAASPTRSSSSASQSNHSCTSMPSSPATPASGT) has biased composition (low complexity). T7220 is subject to Phosphothreonine. The segment covering 7242 to 7261 (FHSSRTSLAGDTSNSSSPAS) has biased composition (polar residues). A phosphoserine mark is found at S7245 and S7258. Residues 7276–7290 (SRPGSRAGSRAGSRA) are compositionally biased toward low complexity. A 4 X 4 AA tandem repeats of [GS]-S-R-[AR] region spans residues 7279–7294 (GSRAGSRAGSRASSRR). S7296 and S7299 each carry phosphoserine. The span at 7305–7315 (ETQSACSDTSE) shows a compositional bias: polar residues. Residues 7316 to 7327 (SSAAGGQGSSRR) show a composition bias toward low complexity.

The protein belongs to the plakin or cytolinker family. As to quaternary structure, interacts with AXIN1, LRP6 and GOLGA4. Found in a complex composed of MACF1, APC, AXIN1, CTNNB1 and GSK3B. Interacts with MAPRE1, CLASP1 and CLASP2. Interacts with CAMSAP3. In terms of processing, phosphorylated on serine residues in the C-terminal tail by GSK3B. Phosphorylation inhibits microtubule-binding and this plays a critical role in bulge stem cell migration and skin wound repair. Wnt-signaling can repress phosphorylation. As to expression, enriched in the hair follicle stem cells (at protein level). Isoform 1 and isoform 2 are ubiquitous expressed, with higher levels seen in lung, heart, thymus, spleen and brain.

It localises to the cytoplasm. It is found in the cytoskeleton. Its subcellular location is the golgi apparatus. The protein resides in the cell membrane. The protein localises to the cell projection. It localises to the ruffle membrane. In terms of biological role, F-actin-binding protein which plays a role in cross-linking actin to other cytoskeletal proteins and also binds to microtubules. Plays an important role in ERBB2-dependent stabilization of microtubules at the cell cortex. Acts as a positive regulator of Wnt receptor signaling pathway and is involved in the translocation of AXIN1 and its associated complex (composed of APC, CTNNB1 and GSK3B) from the cytoplasm to the cell membrane. Has actin-regulated ATPase activity and is essential for controlling focal adhesions (FAs) assembly and dynamics. Interaction with CAMSAP3 at the minus ends of non-centrosomal microtubules tethers microtubules minus-ends to actin filaments, regulating focal adhesion size and cell migration. May play role in delivery of transport vesicles containing GPI-linked proteins from the trans-Golgi network through its interaction with GOLGA4. Plays a key role in wound healing and epidermal cell migration. Required for efficient upward migration of bulge cells in response to wounding and this function is primarily rooted in its ability to coordinate microtubule dynamics and polarize hair follicle stem cells. As a regulator of actin and microtubule arrangement and stabilization, it plays an essential role in neurite outgrowth, branching and spine formation during brain development. The polypeptide is Microtubule-actin cross-linking factor 1, isoforms 1/2/3/4 (Mus musculus (Mouse)).